A 110-amino-acid chain; its full sequence is DNA-binding protein Mlab_1482 (110 aa).

Belongs to the PDCD5 family.

This is DNA-binding protein Mlab_1482 from Methanocorpusculum labreanum (strain ATCC 43576 / DSM 4855 / Z).